The chain runs to 148 residues: D-aminoacyl-tRNA deacylase (148 aa).

A Gly-cisPro motif, important for rejection of L-amino acids motif is present at residues 137 to 138 (GP).

Belongs to the DTD family. As to quaternary structure, homodimer.

It localises to the cytoplasm. The catalysed reaction is glycyl-tRNA(Ala) + H2O = tRNA(Ala) + glycine + H(+). It carries out the reaction a D-aminoacyl-tRNA + H2O = a tRNA + a D-alpha-amino acid + H(+). An aminoacyl-tRNA editing enzyme that deacylates mischarged D-aminoacyl-tRNAs. Also deacylates mischarged glycyl-tRNA(Ala), protecting cells against glycine mischarging by AlaRS. Acts via tRNA-based rather than protein-based catalysis; rejects L-amino acids rather than detecting D-amino acids in the active site. By recycling D-aminoacyl-tRNA to D-amino acids and free tRNA molecules, this enzyme counteracts the toxicity associated with the formation of D-aminoacyl-tRNA entities in vivo and helps enforce protein L-homochirality. The chain is D-aminoacyl-tRNA deacylase from Lactiplantibacillus plantarum (strain ATCC BAA-793 / NCIMB 8826 / WCFS1) (Lactobacillus plantarum).